We begin with the raw amino-acid sequence, 410 residues long: Angiopoietin-related protein 4 (410 aa).

The first 23 residues, 1-23 (MRCAPTAGAALVLCAATAGLLSA), serve as a signal peptide directing secretion. The interval 79 to 101 (ACQGPKGKDAPFKDSEDRVPEGQ) is disordered. The segment covering 84–98 (KGKDAPFKDSEDRVP) has biased composition (basic and acidic residues). Positions 104-152 (ETLQSLQTQLKAQNSKIQQLFQKVAQQQRYLSKQNLRIQNLQSQIDLLA) form a coiled coil. The N-linked (GlcNAc...) asparagine glycan is linked to Asn-181. The 223-residue stretch at 183–405 (THLHRPPRDC…ATTLLIQPME (223 aa)) folds into the Fibrinogen C-terminal domain. Cys-192 and Cys-220 are disulfide-bonded. 2 N-linked (GlcNAc...) asparagine glycosylation sites follow: Asn-236 and Asn-242. Cys-345 and Cys-358 are joined by a disulfide.

Homooligomer; disulfide-linked via Cys residues in the N-terminal part of the protein. The homooligomer undergoes proteolytic processing to release the ANGPTL4 C-terminal chain, which circulates as a monomer. The homooligomer unprocessed form is able to interact with the extracellular matrix. Post-translationally, N-glycosylated. In terms of processing, forms disulfide-linked dimers and tetramers. Cleaved into a smaller N-terminal chain and a larger chain that contains the fibrinogen C-terminal domain; both cleaved and uncleaved forms are detected in the extracellular space. The cleaved form is not present within the cell. Detected in liver and kidney. Predominantly expressed in adipose tissue and is strongly up-regulated by fasting in white adipose tissue and liver. More abundant in areas of lower flow stress in the inner curvature compared to the outer curvature regions of the aorta (at protein level).

Its subcellular location is the secreted. The protein resides in the extracellular space. It is found in the extracellular matrix. Functionally, mediates inactivation of the lipoprotein lipase LPL, and thereby plays a role in the regulation of triglyceride clearance from the blood serum and in lipid metabolism. May also play a role in regulating glucose homeostasis and insulin sensitivity. Inhibits proliferation, migration, and tubule formation of endothelial cells and reduces vascular leakage. Upon heterologous expression, inhibits the adhesion of endothelial cell to the extracellular matrix (ECM), and inhibits the reorganization of the actin cytoskeleton, formation of actin stress fibers and focal adhesions in endothelial cells that have adhered to ANGPTL4-containing ECM (in vitro). Depending on context, may modulate tumor-related angiogenesis. In terms of biological role, mediates inactivation of the lipoprotein lipase LPL, and thereby plays an important role in the regulation of triglyceride clearance from the blood serum and in lipid metabolism. Has higher activity in LPL inactivation than the uncleaved protein. The chain is Angiopoietin-related protein 4 (Angptl4) from Mus musculus (Mouse).